The following is a 264-amino-acid chain: NADH-quinone oxidoreductase subunit I 2 (264 aa).

4Fe-4S ferredoxin-type domains lie at 57 to 86 and 98 to 127; these read GFLEVDSGICTGCQACERACPIGCIQISLE and TQFDIDEAKCMFCGLCVEPCPTGSIQHTRE. C66, C69, C72, C76, C107, C110, C113, and C117 together coordinate [4Fe-4S] cluster. The interval 183 to 264 is disordered; it reads APQFLPPEPP…AAPAANPESK (82 aa). Positions 197–264 are enriched in low complexity; sequence AKPAAKAAPA…AAPAANPESK (68 aa).

Belongs to the complex I 23 kDa subunit family. NDH-1 is composed of 14 different subunits. Subunits NuoA, H, J, K, L, M, N constitute the membrane sector of the complex. It depends on [4Fe-4S] cluster as a cofactor.

It is found in the cell inner membrane. It carries out the reaction a quinone + NADH + 5 H(+)(in) = a quinol + NAD(+) + 4 H(+)(out). In terms of biological role, NDH-1 shuttles electrons from NADH, via FMN and iron-sulfur (Fe-S) centers, to quinones in the respiratory chain. The immediate electron acceptor for the enzyme in this species is believed to be ubiquinone. Couples the redox reaction to proton translocation (for every two electrons transferred, four hydrogen ions are translocated across the cytoplasmic membrane), and thus conserves the redox energy in a proton gradient. The chain is NADH-quinone oxidoreductase subunit I 2 from Anaeromyxobacter dehalogenans (strain 2CP-C).